Consider the following 175-residue polypeptide: Tumor necrosis factor receptor superfamily member 13C (175 aa).

Topologically, residues 1–71 (MGARRLRVRS…EGSALRPDVA (71 aa)) are extracellular. One copy of the TNFR-Cys; truncated repeat lies at 21–38 (QCNQTECFDPLVRNCVSC). 2 disulfides stabilise this stretch: C22–C35 and C27–C38. Residue N23 is glycosylated (N-linked (GlcNAc...) asparagine). An essential for TNFSF13B/TALL1/BAFF/BLyS binding region spans residues 29–34 (DPLVRN). Residues 72–92 (LLVGAPALLGLILALTLVGLV) form a helical; Signal-anchor for type III membrane protein membrane-spanning segment. Topologically, residues 93-175 (SLVSWRWRQQ…VTTKTAGPEQ (83 aa)) are cytoplasmic. Residues 124–175 (VPSSETPHASAPTWPPLKEDADSALPRHSVPVPATELGSTELVTTKTAGPEQ) are disordered. The segment covering 160–175 (LGSTELVTTKTAGPEQ) has biased composition (polar residues).

Highly expressed in spleen and testis; detected at lower levels in lung and thymus.

The protein localises to the membrane. Its function is as follows. B-cell receptor specific for TNFSF13B/TALL1/BAFF/BLyS. Promotes the survival of mature B-cells and the B-cell response. The polypeptide is Tumor necrosis factor receptor superfamily member 13C (Tnfrsf13c) (Mus musculus (Mouse)).